Reading from the N-terminus, the 122-residue chain is MIQAFTRLNVADNTGAKEVMCIKVLGGSKRRYAQVGDVIIASVKKATPTAKVKKGKVVKAVIVRTAKEIHRENGSLIRFDDNAAVILDDKREPIGTRIFGPIAREVRYSGFMKIVSLAPEVV.

The protein belongs to the universal ribosomal protein uL14 family. Part of the 50S ribosomal subunit. Forms a cluster with proteins L3 and L19. In the 70S ribosome, L14 and L19 interact and together make contacts with the 16S rRNA in bridges B5 and B8.

Binds to 23S rRNA. Forms part of two intersubunit bridges in the 70S ribosome. The protein is Large ribosomal subunit protein uL14 of Sulfurimonas denitrificans (strain ATCC 33889 / DSM 1251) (Thiomicrospira denitrificans (strain ATCC 33889 / DSM 1251)).